A 126-amino-acid chain; its full sequence is Fluoride-specific ion channel FluC (126 aa).

Helical transmembrane passes span 5–25 (GFVA…FFSV), 36–56 (YGTL…VAFF), 69–89 (LAVT…SEVI), and 99–119 (WAML…AFGI). Na(+) is bound by residues glycine 76 and threonine 79.

It belongs to the fluoride channel Fluc/FEX (TC 1.A.43) family.

It localises to the cell inner membrane. It carries out the reaction fluoride(in) = fluoride(out). Na(+) is not transported, but it plays an essential structural role and its presence is essential for fluoride channel function. Functionally, fluoride-specific ion channel. Important for reducing fluoride concentration in the cell, thus reducing its toxicity. This Cupriavidus metallidurans (strain ATCC 43123 / DSM 2839 / NBRC 102507 / CH34) (Ralstonia metallidurans) protein is Fluoride-specific ion channel FluC.